The sequence spans 848 residues: DNA mismatch repair protein MutS (848 aa).

605–612 (GPNMAGKS) is an ATP binding site.

Belongs to the DNA mismatch repair MutS family.

This protein is involved in the repair of mismatches in DNA. It is possible that it carries out the mismatch recognition step. This protein has a weak ATPase activity. In Leptospira interrogans serogroup Icterohaemorrhagiae serovar copenhageni (strain Fiocruz L1-130), this protein is DNA mismatch repair protein MutS.